The sequence spans 642 residues: Transmembrane 9 superfamily member 4 (642 aa).

An N-terminal signal peptide occupies residues 1–23 (MATAMDWLPWSLLLFSLMCETSA). At 24–281 (FYVPGVAPIN…TMSDVQIHWF (258 aa)) the chain is on the extracellular side. Residues 282–302 (SIINSVVVVFFLSGILSMIII) traverse the membrane as a helical segment. The Cytoplasmic segment spans residues 303-346 (RTLRKDIANYNKEDDIEDTMEESGWKLVHGDVFRPPQYPMILSS). Tyrosine 312 carries the post-translational modification Phosphotyrosine. A helical transmembrane segment spans residues 347 to 367 (LLGSGIQLFCMILIVIFVAML). Residues 368–376 (GMLSPSSRG) are Extracellular-facing. A helical transmembrane segment spans residues 377-397 (ALMTTACFLFMFMGVFGGFSA). Residues 398–416 (GRLYRTLKGHRWKKGAFCT) lie on the Cytoplasmic side of the membrane. Residues 417–437 (ATLYPGVVFGICFVLNCFIWG) traverse the membrane as a helical segment. Over 438 to 449 (KHSSGAVPFPTM) the chain is Extracellular. A helical membrane pass occupies residues 450 to 470 (VALLCMWFGISLPLVYLGYYF). Residues 471–501 (GFRKQPYDNPVRTNQIPRQIPEQRWYMNRFV) are Cytoplasmic-facing. The helical transmembrane segment at 502–522 (GILMAGILPFGAMFIELFFIF) threads the bilayer. Over 523 to 535 (SAIWENQFYYLFG) the chain is Extracellular. The chain crosses the membrane as a helical span at residues 536-556 (FLFLVFIILVVSCSQISIVMV). The Cytoplasmic segment spans residues 557 to 570 (YFQLCAEDYRWWWR). Residues 571–591 (NFLVSGGSAFYVLVYAIFYFV) traverse the membrane as a helical segment. The Extracellular portion of the chain corresponds to 592-598 (NKLDIVE). The helical transmembrane segment at 599-619 (FIPSLLYFGYTALMVLSFWLL) threads the bilayer. Residues 620–642 (TGTIGFYAAYMFVRKIYAAVKID) are Cytoplasmic-facing.

The protein belongs to the nonaspanin (TM9SF) (TC 9.A.2) family. Interacts with ATP6V1H in colon cancer cells. In terms of tissue distribution, highly expressed in metastatic melanoma cells whereas it is undetectable in primary melanoma cells, healthy skin tissues and peripheral blood lymphocytes. Expressed in CD34(+) hematopoietic progenitor cells and during monocyte and granulocyte differentiation. Overexpressed in acute myeloid leukemia, in particular in those displaying granulocytic differentiation (at protein level).

The protein localises to the membrane. Its subcellular location is the golgi apparatus. It is found in the early endosome. In terms of biological role, associates with proteins harboring glycine-rich transmembrane domains and ensures their efficient localization to the cell surface. Regulates the assembly and activity of V-ATPase in colon cancer cells via its interaction with V-type proton ATPase subunit H (ATP6V1H) and contributes to V-ATPase-mediated pH alterations in cancer cells which play an important role in drug resistance and invasiveness of colon cancer cells. Plays an important role in an atypical phagocytic activity of metastatic melanoma cells called cannibalism and is involved in the pH regulation of the intracellular vesicles in tumor cells. The sequence is that of Transmembrane 9 superfamily member 4 (TM9SF4) from Homo sapiens (Human).